Here is a 97-residue protein sequence, read N- to C-terminus: Large ribosomal subunit protein uL23 (97 aa).

The protein belongs to the universal ribosomal protein uL23 family. Part of the 50S ribosomal subunit. Contacts protein L29, and trigger factor when it is bound to the ribosome.

Its function is as follows. One of the early assembly proteins it binds 23S rRNA. One of the proteins that surrounds the polypeptide exit tunnel on the outside of the ribosome. Forms the main docking site for trigger factor binding to the ribosome. The sequence is that of Large ribosomal subunit protein uL23 from Bartonella henselae (strain ATCC 49882 / DSM 28221 / CCUG 30454 / Houston 1) (Rochalimaea henselae).